The primary structure comprises 162 residues: 2-C-methyl-D-erythritol 2,4-cyclodiphosphate synthase (162 aa).

Positions 9 and 11 each coordinate a divalent metal cation. Residues 9–11 (DVH) and 35–36 (HS) contribute to the 4-CDP-2-C-methyl-D-erythritol 2-phosphate site. Histidine 43 is an a divalent metal cation binding site. Residues 57–59 (DIG), 62–66 (FPDTD), 133–136 (TTTE), phenylalanine 140, and arginine 143 each bind 4-CDP-2-C-methyl-D-erythritol 2-phosphate.

It belongs to the IspF family. Homotrimer. A divalent metal cation is required as a cofactor.

It catalyses the reaction 4-CDP-2-C-methyl-D-erythritol 2-phosphate = 2-C-methyl-D-erythritol 2,4-cyclic diphosphate + CMP. Its pathway is isoprenoid biosynthesis; isopentenyl diphosphate biosynthesis via DXP pathway; isopentenyl diphosphate from 1-deoxy-D-xylulose 5-phosphate: step 4/6. Its function is as follows. Involved in the biosynthesis of isopentenyl diphosphate (IPP) and dimethylallyl diphosphate (DMAPP), two major building blocks of isoprenoid compounds. Catalyzes the conversion of 4-diphosphocytidyl-2-C-methyl-D-erythritol 2-phosphate (CDP-ME2P) to 2-C-methyl-D-erythritol 2,4-cyclodiphosphate (ME-CPP) with a corresponding release of cytidine 5-monophosphate (CMP). The protein is 2-C-methyl-D-erythritol 2,4-cyclodiphosphate synthase of Histophilus somni (strain 129Pt) (Haemophilus somnus).